The chain runs to 64 residues: Phi-buthitoxin-Hj1a (64 aa).

The signal sequence occupies residues 1–18; the sequence is MNSFVVVLLLFIAILCNA. 3 cysteine pairs are disulfide-bonded: cysteine 29-cysteine 43, cysteine 36-cysteine 49, and cysteine 42-cysteine 58.

Belongs to the scorpion calcin-like family. As to expression, expressed by the venom gland.

It localises to the secreted. Functionally, may increase intracellular calcium release through the activation of nuclear inositol 1,4,5-trisphosphate receptors (ITPR) of cardiomyocytes, thereby causing an increase in the contraction frequency of these cells. The chain is Phi-buthitoxin-Hj1a from Hottentotta judaicus (Black scorpion).